Here is a 250-residue protein sequence, read N- to C-terminus: uncharacterized protein (250 aa).

One can recognise an ABC transporter domain in the interval 7-244; that stretch reads LKVEDLHVYR…YKKECGKCYK (238 aa). Position 39–46 (39–46) interacts with ATP; sequence GPNGAGKS.

The protein belongs to the ABC transporter superfamily.

This is an uncharacterized protein from Methanocaldococcus jannaschii (strain ATCC 43067 / DSM 2661 / JAL-1 / JCM 10045 / NBRC 100440) (Methanococcus jannaschii).